The primary structure comprises 338 residues: 3-dehydroquinate synthase (338 aa).

The protein belongs to the archaeal-type DHQ synthase family.

The enzyme catalyses 2-amino-2,3,7-trideoxy-D-lyxo-hept-6-ulosonate + NAD(+) + H2O = 3-dehydroquinate + NH4(+) + NADH + H(+). Functionally, catalyzes the oxidative deamination and cyclization of 2-amino-3,7-dideoxy-D-threo-hept-6-ulosonic acid (ADH) to yield 3-dehydroquinate (DHQ), which is fed into the canonical shikimic pathway of aromatic amino acid biosynthesis. In Cenarchaeum symbiosum (strain A), this protein is 3-dehydroquinate synthase.